The chain runs to 327 residues: Malate dehydrogenase (327 aa).

12-18 is a binding site for NAD(+); sequence GAAGQIC. Residues Arg92 and Arg98 each coordinate substrate. NAD(+)-binding positions include Asn105, Gln112, and 129 to 131; that span reads TGN. Residues Asn131 and Arg162 each coordinate substrate. The active-site Proton acceptor is the His187.

It belongs to the LDH/MDH superfamily. MDH type 2 family.

It carries out the reaction (S)-malate + NAD(+) = oxaloacetate + NADH + H(+). Catalyzes the reversible oxidation of malate to oxaloacetate. In Cutibacterium acnes (strain DSM 16379 / KPA171202) (Propionibacterium acnes), this protein is Malate dehydrogenase.